The primary structure comprises 518 residues: MNSQVIIFDTTLRDGEQALQASLSVKQKLQIALSLENAGIDIIEVGFPISSPGDFKSVQTISKNIKNSRICSLARCLNKDIDTAAEAMSSSNTFRIHIFLATSTLHMESKLKKNFDQIIDMAISSVKRALRYTDDVEFSCEDASRTTMDNLCRIVEQLIKAGVKTINIPDTVGYTVPNELSTIIHNLFKRVPNIDQSIISVHCHNDLGMAVGNSISAIQAGARQIEGTINGIGERAGNTALEEVIMAIKVREDILGVSTNIKHKEIYRTSQIISQICNLPIPPNKAIVGSNAFAHSSGIHQDGVLKNRKNYEIMEPSSIGLKEVKLNLTSRSGRAAVKYYMTQMGYKECDYNIDELYTSFLKLADKKGQVFDYDLEALAFINMQQEESEYFSLSFFSVQSISNGLSTASVKLLCGKKVSIESATTSNGPIDAIYQALNRITNFPITLQKYQLVAKGKGRDALGQVDILVEYKKRKFHGVGLATDIIESSAQAMVNVLNNIWKANQVNEKLKTLKKVNN.

One can recognise a Pyruvate carboxyltransferase domain in the interval Val-5–Tyr-267. Residues Asp-14, His-202, His-204, and Asn-238 each contribute to the Mn(2+) site. The regulatory domain stretch occupies residues Ser-392–Asn-518.

Belongs to the alpha-IPM synthase/homocitrate synthase family. LeuA type 1 subfamily. As to quaternary structure, homodimer. Requires Mn(2+) as cofactor.

It localises to the cytoplasm. It catalyses the reaction 3-methyl-2-oxobutanoate + acetyl-CoA + H2O = (2S)-2-isopropylmalate + CoA + H(+). The protein operates within amino-acid biosynthesis; L-leucine biosynthesis; L-leucine from 3-methyl-2-oxobutanoate: step 1/4. In terms of biological role, catalyzes the condensation of the acetyl group of acetyl-CoA with 3-methyl-2-oxobutanoate (2-ketoisovalerate) to form 3-carboxy-3-hydroxy-4-methylpentanoate (2-isopropylmalate). The protein is 2-isopropylmalate synthase of Buchnera aphidicola subsp. Schizaphis graminum (strain Sg).